The primary structure comprises 595 residues: Coiled-coil domain-containing protein 22 (595 aa).

The sufficient for interaction with COMMD1 stretch occupies residues 1–321 (MEEADRILIH…VSDVPATSQR (321 aa)). The tract at residues 1–447 (MEEADRILIH…LQDCRELESS (447 aa)) is sufficicient and required for interaction with CCDC93. Positions 218–230 (TGRDRAGDEDWGH) are enriched in basic and acidic residues. The disordered stretch occupies residues 218-243 (TGRDRAGDEDWGHRTSRLPAQEDTRA). The stretch at 323-369 (EQDTWAAQEQELESLREQLEGVNHNIEEVEANMKTLGINLVQVETEC) forms a coiled coil. Serine 410 is modified (phosphoserine). Coiled-coil stretches lie at residues 447-484 (SRRLAEIQELHQSVRAAAEEARRKEEVYKQLVSELETL) and 564-595 (GKKTLSNLDKIREDYRALRQENAGLLGRVREA).

This sequence belongs to the CCDC22 family. As to quaternary structure, component of the commander complex consisting of the CCC subcomplex and the retriever subcomplex. Component of the CCC (COMMD/CCDC22/CCDC93) subcomplex consisting of COMMD1, COMMD2, COMMD3, COMMD4, COMMD5, COMMD6, COMMD7, COMMD8, COMMD9, COMMD10, CCDC22 and CCDC93. Forms a coiled-coil heterodimer with CCDC22; this heterodimer interacts with the guanine nucleotide exchange factor DENND10; the interaction is direct. Interacts with CUL1, CUL2, CUL3, SKP1, BTRC. Interacts with SNX17 and SNX31. Interacts with CPNE1 and CPNE4.

It localises to the endosome. It is found in the cytoplasm. The protein resides in the cytoskeleton. Its subcellular location is the microtubule organizing center. The protein localises to the centrosome. Functionally, component of the commander complex that is essential for endosomal recycling of transmembrane cargos; the Commander complex is composed of composed of the CCC subcomplex and the retriever subcomplex. Component of the CCC complex, which is involved in the regulation of endosomal recycling of surface proteins, including integrins, signaling receptor and channels. Involved in regulation of NF-kappa-B signaling. Promotes ubiquitination of I-kappa-B-kinase subunit IKBKB and its subsequent proteasomal degradation leading to NF-kappa-B activation; the function may involve association with COMMD8 and a CUL1-dependent E3 ubiquitin ligase complex. May down-regulate NF-kappa-B activity via association with COMMD1 and involving a CUL2-dependent E3 ubiquitin ligase complex. Regulates the cellular localization of COMM domain-containing proteins, such as COMMD1 and COMMD10. Component of the CCC complex, which is involved in the regulation of endosomal recycling of surface proteins, including integrins, signaling receptor and channels. The CCC complex associates with SNX17, retriever and WASH complexes to prevent lysosomal degradation and promote cell surface recycling of numerous cargos such as integrins ITGA5:ITGB1. Plays a role in copper ion homeostasis. Involved in copper-dependent ATP7A trafficking between the trans-Golgi network and vesicles in the cell periphery; the function is proposed to depend on its association within the CCC complex and cooperation with the WASH complex on early endosomes. The protein is Coiled-coil domain-containing protein 22 (CCDC22) of Bos taurus (Bovine).